We begin with the raw amino-acid sequence, 198 residues long: Synaptobrevin homolog YKT6-A (198 aa).

Positions 8–127 (VLYKGENKVH…IQYNALDSYL (120 aa)) constitute a Longin domain. Residues 138 to 198 (PMSKVQAELD…RKQNSCCDIM (61 aa)) form the v-SNARE coiled-coil homology domain. A lipid anchor (S-palmitoyl cysteine) is attached at Cys-194. Cys-195 is modified (cysteine methyl ester). Cys-195 is lipidated: S-farnesyl cysteine. The propeptide at 196–198 (DIM) is removed in mature form.

It belongs to the synaptobrevin family. In terms of processing, palmitoylated; catalyzes its own palmitoylation. Palmitoylation is required for Golgi targeting. Farnesylation is required for Golgi targeting.

The protein localises to the cytoplasm. The protein resides in the cytosol. It localises to the cytoplasmic vesicle membrane. Its subcellular location is the golgi apparatus membrane. Its function is as follows. Vesicular soluble NSF attachment protein receptor (v-SNARE) mediating vesicle docking and fusion to a specific acceptor cellular compartment. Functions in endoplasmic reticulum to Golgi transport; as part of a SNARE complex composed of GOSR1, GOSR2 and STX5. Functions in early/recycling endosome to TGN transport; as part of a SNARE complex composed of BET1L, GOSR1 and STX5. Has a S-palmitoyl transferase activity. The sequence is that of Synaptobrevin homolog YKT6-A (ykt6-a) from Xenopus laevis (African clawed frog).